The sequence spans 95 residues: MNTKLTVLCFLGIVTIVSCGWMSEKKVQGILDKKLPEGIIRNAAKAIVHKMAKNQFGCFANVDVKGDCKRHCKAEDKEGICHGTKCKCGVPISYL.

A signal peptide spans M1–C19. A BetaSPN-type CS-alpha/beta domain is found at Q55–Y94. 3 disulfides stabilise this stretch: C58–C81, C68–C86, and C72–C88.

This sequence belongs to the long chain scorpion toxin family. Class 3 subfamily. As to expression, expressed by the venom gland.

Its subcellular location is the secreted. Its function is as follows. Has antibacterial activity against B.subtilis, but not against S.aureus. Also has hemolytic and cytolytic activities. Since cell lysis occurs at the tested concentrations, observation of activity on potassium channels is impossible. Functionally, blocks Kv1.1/KCNA1 (IC(50)=185 nM) potassium channels. Shows a weak hemolytic activity. The protein is Hge-scorpine of Hoffmannihadrurus gertschi (Scorpion).